An 82-amino-acid polypeptide reads, in one-letter code: RNA-binding protein GTNG_0100 (82 aa).

Belongs to the eukaryotic ribosomal protein eL8 family.

In Geobacillus thermodenitrificans (strain NG80-2), this protein is RNA-binding protein GTNG_0100.